A 167-amino-acid chain; its full sequence is Sporulation membrane protein YtrI (167 aa).

A helical membrane pass occupies residues 15 to 35 (FFAGMMCGAVISWFFFLFTYG).

Its subcellular location is the cell membrane. In terms of biological role, involved in sporulation. The chain is Sporulation membrane protein YtrI (ytrI) from Bacillus subtilis (strain 168).